Reading from the N-terminus, the 472-residue chain is Cysteine--tRNA ligase (472 aa).

Residue Cys29 coordinates Zn(2+). Residues 31–41 (PTVYDFAHIGN) carry the 'HIGH' region motif. Residues Cys227, His252, and Glu256 each coordinate Zn(2+). The 'KMSKS' region signature appears at 285-289 (KMSKS). Lys288 serves as a coordination point for ATP.

The protein belongs to the class-I aminoacyl-tRNA synthetase family. In terms of assembly, monomer. Zn(2+) serves as cofactor.

Its subcellular location is the cytoplasm. The enzyme catalyses tRNA(Cys) + L-cysteine + ATP = L-cysteinyl-tRNA(Cys) + AMP + diphosphate. This chain is Cysteine--tRNA ligase, found in Bradyrhizobium sp. (strain BTAi1 / ATCC BAA-1182).